The sequence spans 475 residues: uncharacterized protein (475 aa).

Residues 185–244 (EISVSAISEQLASLMERVDKLEKMNAALEEENKQLKKEREATIKSVKKEAKKIKQEKPQI) adopt a coiled-coil conformation.

This is an uncharacterized protein from Nora virus.